The primary structure comprises 314 residues: MKLNVAVQMDPIARINIKGDSTFALLLEAQKRGHGLSYYTPDKLSMIGEELVAPVQLLTVRDEPGDHFTLGEPKREALNGFDVVLLRQDPPFDLAYITSTHFLERIHPKTLVVNDPASVRNAPEKLFVMNFPQLMPPTLISRDLDEINAFRDKHGAVVMKPLHGHGGAAVFRVMPQDMNFGSLFDMFTVTFKEPWVIQQFIPEVKHGDKRIILVNGEFAGAVNRVPAADDLRSNMVRGGAAQETELTPREREICATVGPALRERGLLFVGIDVINGNLTEINVTSPTGIRAIARLGGPDVAAKVWDTIEQKRAK.

In terms of domain architecture, ATP-grasp spans 125 to 309; sequence KLFVMNFPQL…VAAKVWDTIE (185 aa). Position 151-207 (151-207) interacts with ATP; that stretch reads RDKHGAVVMKPLHGHGGAAVFRVMPQDMNFGSLFDMFTVTFKEPWVIQQFIPEVKHG. Residues E280 and N282 each coordinate Mg(2+).

It belongs to the prokaryotic GSH synthase family. Requires Mg(2+) as cofactor. Mn(2+) serves as cofactor.

The catalysed reaction is gamma-L-glutamyl-L-cysteine + glycine + ATP = glutathione + ADP + phosphate + H(+). It participates in sulfur metabolism; glutathione biosynthesis; glutathione from L-cysteine and L-glutamate: step 2/2. This is Glutathione synthetase from Bradyrhizobium diazoefficiens (strain JCM 10833 / BCRC 13528 / IAM 13628 / NBRC 14792 / USDA 110).